We begin with the raw amino-acid sequence, 188 residues long: Josephin-2 (188 aa).

One can recognise a Josephin domain in the interval 11–188 (PPSVYHERQR…EEAGCWLNTS (178 aa)). Cysteine 24 (nucleophile) is an active-site residue. Residue histidine 125 is the Proton acceptor of the active site.

It localises to the cytoplasm. The protein resides in the cytosol. It carries out the reaction Thiol-dependent hydrolysis of ester, thioester, amide, peptide and isopeptide bonds formed by the C-terminal Gly of ubiquitin (a 76-residue protein attached to proteins as an intracellular targeting signal).. Cleaves 'Lys-63'-linked poly-ubiquitin chains, and with lesser efficiency 'Lys-48'-linked poly-ubiquitin chains (in vitro). May act as a deubiquitinating enzyme. In Mus musculus (Mouse), this protein is Josephin-2 (Josd2).